We begin with the raw amino-acid sequence, 201 residues long: NADH-quinone oxidoreductase subunit C (201 aa).

The protein belongs to the complex I 30 kDa subunit family. As to quaternary structure, NDH-1 is composed of 14 different subunits. Subunits NuoB, C, D, E, F, and G constitute the peripheral sector of the complex.

The protein localises to the cell inner membrane. The catalysed reaction is a quinone + NADH + 5 H(+)(in) = a quinol + NAD(+) + 4 H(+)(out). Its function is as follows. NDH-1 shuttles electrons from NADH, via FMN and iron-sulfur (Fe-S) centers, to quinones in the respiratory chain. The immediate electron acceptor for the enzyme in this species is believed to be ubiquinone. Couples the redox reaction to proton translocation (for every two electrons transferred, four hydrogen ions are translocated across the cytoplasmic membrane), and thus conserves the redox energy in a proton gradient. The polypeptide is NADH-quinone oxidoreductase subunit C (Sinorhizobium medicae (strain WSM419) (Ensifer medicae)).